Reading from the N-terminus, the 279-residue chain is Troponin T, fast skeletal muscle (279 aa).

Acidic residues predominate over residues 1–21; it reads MSDEEVEHVEEQYEEEEEAQE. Residues 1–82 form a disordered region; it reads MSDEEVEHVE…EKVDFDDIQK (82 aa). Position 2 is an N-acetylserine (Ser2). A Phosphoserine modification is found at Ser2. Composition is skewed to basic and acidic residues over residues 28–49 and 70–82; these read EVHEPAPEVHVPEEVHEDALED and PEGEKVDFDDIQK. Residue Ser98 is modified to Phosphoserine. Positions 121 to 163 are enriched in basic and acidic residues; that stretch reads RAERAEQQRIRAEKERERQNRLAEEKARREEEDAKRRAEEDLK. Residues 121 to 200 are disordered; it reads RAERAEQQRI…TAREMKKKIL (80 aa). Phosphoserine is present on residues Ser169, Ser176, and Ser177. A compositionally biased stretch (basic and acidic residues) spans 191-200; it reads TAREMKKKIL. A Phosphoserine modification is found at Ser213. Tyr229 is modified (phosphotyrosine).

The protein belongs to the troponin T family.

In terms of biological role, troponin T is the tropomyosin-binding subunit of troponin, the thin filament regulatory complex which confers calcium-sensitivity to striated muscle actomyosin ATPase activity. This chain is Troponin T, fast skeletal muscle (TNNT3), found in Oryctolagus cuniculus (Rabbit).